The chain runs to 298 residues: Tyrosine recombinase XerC (298 aa).

One can recognise a Core-binding (CB) domain in the interval 2 to 88 (TDLHTDVERY…ALRSFFDWLV (87 aa)). Positions 109 to 288 (HLPKNIDVDD…DFQHLASVYD (180 aa)) constitute a Tyr recombinase domain. Catalysis depends on residues R148, K172, H240, R243, and H266. Y275 functions as the O-(3'-phospho-DNA)-tyrosine intermediate in the catalytic mechanism.

The protein belongs to the 'phage' integrase family. XerC subfamily. As to quaternary structure, forms a cyclic heterotetrameric complex composed of two molecules of XerC and two molecules of XerD, in which XerC interacts with XerD via its C-terminal region, XerD interacts with XerC via its C-terminal region and so on.

It localises to the cytoplasm. FtsK may regulate the catalytic switch between XerC and XerD in the heterotetrameric complex during the two steps of the recombination process. Functionally, site-specific tyrosine recombinase, which acts by catalyzing the cutting and rejoining of the recombining DNA molecules. Binds cooperatively to specific DNA consensus sequences that are separated from XerD binding sites by a short central region, forming the heterotetrameric XerC-XerD complex that recombines DNA substrates. The complex is essential to convert dimers of the bacterial chromosome into monomers to permit their segregation at cell division. It also contributes to the segregational stability of plasmids. In the complex XerC specifically exchanges the top DNA strands. This chain is Tyrosine recombinase XerC, found in Escherichia coli O127:H6 (strain E2348/69 / EPEC).